The chain runs to 303 residues: Bifunctional protein FolD (303 aa).

NADP(+) is bound by residues 165 to 167 (GRS), Ser190, and Ile231.

Belongs to the tetrahydrofolate dehydrogenase/cyclohydrolase family. In terms of assembly, homodimer.

It carries out the reaction (6R)-5,10-methylene-5,6,7,8-tetrahydrofolate + NADP(+) = (6R)-5,10-methenyltetrahydrofolate + NADPH. The enzyme catalyses (6R)-5,10-methenyltetrahydrofolate + H2O = (6R)-10-formyltetrahydrofolate + H(+). Its pathway is one-carbon metabolism; tetrahydrofolate interconversion. Catalyzes the oxidation of 5,10-methylenetetrahydrofolate to 5,10-methenyltetrahydrofolate and then the hydrolysis of 5,10-methenyltetrahydrofolate to 10-formyltetrahydrofolate. This chain is Bifunctional protein FolD, found in Prochlorococcus marinus (strain NATL2A).